The following is a 360-amino-acid chain: Meiosis-inducing protein 1 (360 aa).

The interval 102–135 (SKETKTTKDCTMATGPERGKKSSESTRSSSLSSL) is disordered. A compositionally biased stretch (low complexity) spans 126 to 135 (STRSSSLSSL).

Interacts with UME6.

The protein resides in the nucleus. In terms of biological role, transcription factor required for sporulation and for early sporulation-specific genes expression. Positive regulator of SME1/IME2 expression. Directly activates expression of SLZ1 during meiosis. The protein is Meiosis-inducing protein 1 (IME1) of Saccharomyces cerevisiae (strain ATCC 204508 / S288c) (Baker's yeast).